Consider the following 321-residue polypeptide: Phospho-N-acetylmuramoyl-pentapeptide-transferase (321 aa).

9 consecutive transmembrane segments (helical) span residues 1 to 21 (MSLL…FALM), 53 to 73 (TMGG…VGGW), 77 to 97 (LQPT…LGFW), 110 to 130 (GLKA…LTLV), 145 to 165 (LGVW…LVGF), 174 to 194 (GLDG…AVIA), 200 to 220 (YNVM…FVYN), 226 to 248 (IFMG…ILLH), and 301 to 321 (IDIV…ATII).

Belongs to the glycosyltransferase 4 family. MraY subfamily. The cofactor is Mg(2+).

It is found in the cell membrane. The enzyme catalyses UDP-N-acetyl-alpha-D-muramoyl-L-alanyl-gamma-D-glutamyl-L-lysyl-D-alanyl-D-alanine + di-trans,octa-cis-undecaprenyl phosphate = Mur2Ac(oyl-L-Ala-gamma-D-Glu-L-Lys-D-Ala-D-Ala)-di-trans,octa-cis-undecaprenyl diphosphate + UMP. The protein operates within cell wall biogenesis; peptidoglycan biosynthesis. Its function is as follows. Catalyzes the initial step of the lipid cycle reactions in the biosynthesis of the cell wall peptidoglycan: transfers peptidoglycan precursor phospho-MurNAc-pentapeptide from UDP-MurNAc-pentapeptide onto the lipid carrier undecaprenyl phosphate, yielding undecaprenyl-pyrophosphoryl-MurNAc-pentapeptide, known as lipid I. The polypeptide is Phospho-N-acetylmuramoyl-pentapeptide-transferase (Lactiplantibacillus plantarum (strain ATCC BAA-793 / NCIMB 8826 / WCFS1) (Lactobacillus plantarum)).